The chain runs to 89 residues: Large ribosomal subunit protein bL27 (89 aa).

Residues 1-24 (MAHKKAGGSSRNGRDSDGRRLGVK) form a disordered region.

It belongs to the bacterial ribosomal protein bL27 family.

The protein is Large ribosomal subunit protein bL27 of Azorhizobium caulinodans (strain ATCC 43989 / DSM 5975 / JCM 20966 / LMG 6465 / NBRC 14845 / NCIMB 13405 / ORS 571).